The following is a 656-amino-acid chain: Protein arginine N-methyltransferase 7 (656 aa).

SAM-dependent MTase PRMT-type domains are found at residues 12–338 and 343–656; these read EREW…FSIW and GKDS…QSGN.

It belongs to the class I-like SAM-binding methyltransferase superfamily. Protein arginine N-methyltransferase family. PRMT7 subfamily.

Arginine methyltransferase that can both catalyze the formation of omega-N monomethylarginine (MMA) and symmetrical dimethylarginine (sDMA). The sequence is that of Protein arginine N-methyltransferase 7 (prmt-7) from Caenorhabditis briggsae.